The following is a 345-amino-acid chain: N-acetyl-gamma-glutamyl-phosphate reductase (345 aa).

Cys-142 is a catalytic residue.

Belongs to the NAGSA dehydrogenase family. Type 1 subfamily.

The protein resides in the cytoplasm. It carries out the reaction N-acetyl-L-glutamate 5-semialdehyde + phosphate + NADP(+) = N-acetyl-L-glutamyl 5-phosphate + NADPH + H(+). It participates in amino-acid biosynthesis; L-arginine biosynthesis; N(2)-acetyl-L-ornithine from L-glutamate: step 3/4. Its function is as follows. Catalyzes the NADPH-dependent reduction of N-acetyl-5-glutamyl phosphate to yield N-acetyl-L-glutamate 5-semialdehyde. The chain is N-acetyl-gamma-glutamyl-phosphate reductase from Thermus thermophilus (strain ATCC BAA-163 / DSM 7039 / HB27).